A 275-amino-acid polypeptide reads, in one-letter code: NH(3)-dependent NAD(+) synthetase (275 aa).

50 to 57 (GISGGVDS) contributes to the ATP binding site. D56 is a Mg(2+) binding site. R147 contacts deamido-NAD(+). Residue T167 coordinates ATP. Position 172 (E172) interacts with Mg(2+). Deamido-NAD(+) contacts are provided by K180 and D187. The ATP site is built by K196 and T218. 267–268 (HK) lines the deamido-NAD(+) pocket.

This sequence belongs to the NAD synthetase family. Homodimer.

It carries out the reaction deamido-NAD(+) + NH4(+) + ATP = AMP + diphosphate + NAD(+) + H(+). It participates in cofactor biosynthesis; NAD(+) biosynthesis; NAD(+) from deamido-NAD(+) (ammonia route): step 1/1. Catalyzes the ATP-dependent amidation of deamido-NAD to form NAD. Uses ammonia as a nitrogen source. The protein is NH(3)-dependent NAD(+) synthetase of Pseudomonas putida (strain ATCC 700007 / DSM 6899 / JCM 31910 / BCRC 17059 / LMG 24140 / F1).